A 297-amino-acid chain; its full sequence is HTH-type transcriptional regulator IlvY (297 aa).

One can recognise an HTH lysR-type domain in the interval 1-58 (MDLRDLKTFLHLAESRHFGRSARAMHVSPSTLSRQIQRLEEDLGQPLFVRDNRTVTLT). A DNA-binding region (H-T-H motif) is located at residues 18–37 (FGRSARAMHVSPSTLSRQIQ).

The protein belongs to the LysR transcriptional regulatory family.

The protein resides in the cytoplasm. Functionally, this protein activates the transcription of the ilvC gene in the presence of acetolactate or acetohydroxybutyrate. IlvY is also a negative regulator of its own expression. This is HTH-type transcriptional regulator IlvY (ilvY) from Escherichia coli (strain K12).